The sequence spans 32 residues: Photosystem II reaction center protein Z (32 aa).

A helical transmembrane segment spans residues 12–32 (FGAAAWIGLVLLVGTLYYFVV).

The protein belongs to the PsbZ family. PSII is composed of 1 copy each of membrane proteins PsbA, PsbB, PsbC, PsbD, PsbE, PsbF, PsbH, PsbI, PsbJ, PsbK, PsbL, PsbM, PsbT, PsbY, PsbZ, Psb30/Ycf12, at least 3 peripheral proteins of the oxygen-evolving complex and a large number of cofactors. It forms dimeric complexes.

The protein resides in the plastid. It is found in the chloroplast thylakoid membrane. Its function is as follows. May control the interaction of photosystem II (PSII) cores with the light-harvesting antenna, regulates electron flow through the 2 photosystem reaction centers. PSII is a light-driven water plastoquinone oxidoreductase, using light energy to abstract electrons from H(2)O, generating a proton gradient subsequently used for ATP formation. In Euglena granulata, this protein is Photosystem II reaction center protein Z.